The following is a 705-amino-acid chain: Probable iron-sulfur-binding oxidoreductase FadF (705 aa).

Helical transmembrane passes span Phe-4–Val-24, Ile-71–Ile-91, Ala-109–Phe-129, Ala-146–Met-166, His-173–Gly-193, and Val-199–Val-219. 4Fe-4S ferredoxin-type domains lie at Gln-268–Pro-298 and Gly-360–Ile-391. Cys-277, Cys-280, Cys-283, Cys-287, Cys-371, Cys-374, Cys-377, and Cys-381 together coordinate [4Fe-4S] cluster.

[4Fe-4S] cluster serves as cofactor.

It localises to the cell membrane. The polypeptide is Probable iron-sulfur-binding oxidoreductase FadF (fadF) (Bacillus subtilis (strain 168)).